Here is a 165-residue protein sequence, read N- to C-terminus: MTQTSENVTWLTQEAYNKLKEELEYLTGPARTEISAKIAAAREEGDLRENGGYHAAKEEQGKQELRVRQLTQLLESAKVGEAPAADGVVAPGMVVTIAFDGDEDDTLTFLLASREYASSDIETYSPQSPLGSGVLGHKVGDDAQYELPNGKPASVRILKAEPYNG.

The stretch at 55-78 (AAKEEQGKQELRVRQLTQLLESAK) forms a coiled coil.

The protein belongs to the GreA/GreB family.

Necessary for efficient RNA polymerase transcription elongation past template-encoded arresting sites. The arresting sites in DNA have the property of trapping a certain fraction of elongating RNA polymerases that pass through, resulting in locked ternary complexes. Cleavage of the nascent transcript by cleavage factors such as GreA or GreB allows the resumption of elongation from the new 3'terminus. GreA releases sequences of 2 to 3 nucleotides. The chain is Transcription elongation factor GreA from Streptomyces coelicolor (strain ATCC BAA-471 / A3(2) / M145).